A 40-amino-acid polypeptide reads, in one-letter code: Thioredoxin (40 aa).

An intrachain disulfide couples Cys29 to Cys32.

Belongs to the thioredoxin family.

In terms of biological role, participates in various redox reactions through the reversible oxidation of its active center dithiol to a disulfide and catalyzes dithiol-disulfide exchange reactions. This chain is Thioredoxin (trxA), found in Clostridium sporogenes.